Here is a 239-residue protein sequence, read N- to C-terminus: Transcriptional regulatory protein BtsR (239 aa).

The Response regulatory domain maps to 3 to 116 (KVLIVDDEPL…RLEKTLHRLR (114 aa)). D54 carries the 4-aspartylphosphate modification. The region spanning 137–239 (IPCTGHSRIY…LKSLKEAIGL (103 aa)) is the HTH LytTR-type domain.

Phosphorylated by BtsS.

In terms of biological role, member of the two-component regulatory system BtsS/BtsR. BtsR regulates expression of btsT by binding to its promoter region. The protein is Transcriptional regulatory protein BtsR of Salmonella typhimurium (strain LT2 / SGSC1412 / ATCC 700720).